The following is a 234-amino-acid chain: Uridylate kinase (234 aa).

Position 9-12 (9-12) interacts with ATP; sequence KLSG. Gly-51 serves as a coordination point for UMP. 2 residues coordinate ATP: Gly-52 and Arg-56. Residues Asp-71 and 132–139 contribute to the UMP site; that span reads CGNPFFTT. ATP is bound by residues Thr-159, Tyr-165, and Asp-168.

The protein belongs to the UMP kinase family. Homohexamer.

It localises to the cytoplasm. It carries out the reaction UMP + ATP = UDP + ADP. The protein operates within pyrimidine metabolism; CTP biosynthesis via de novo pathway; UDP from UMP (UMPK route): step 1/1. With respect to regulation, inhibited by UTP. In terms of biological role, catalyzes the reversible phosphorylation of UMP to UDP. In Prochlorococcus marinus (strain MIT 9312), this protein is Uridylate kinase.